A 309-amino-acid polypeptide reads, in one-letter code: Homoserine kinase (309 aa).

Residue 91-101 (PIGSGLGSSAC) participates in ATP binding.

This sequence belongs to the GHMP kinase family. Homoserine kinase subfamily.

Its subcellular location is the cytoplasm. It catalyses the reaction L-homoserine + ATP = O-phospho-L-homoserine + ADP + H(+). The protein operates within amino-acid biosynthesis; L-threonine biosynthesis; L-threonine from L-aspartate: step 4/5. Its function is as follows. Catalyzes the ATP-dependent phosphorylation of L-homoserine to L-homoserine phosphate. In Escherichia fergusonii (strain ATCC 35469 / DSM 13698 / CCUG 18766 / IAM 14443 / JCM 21226 / LMG 7866 / NBRC 102419 / NCTC 12128 / CDC 0568-73), this protein is Homoserine kinase.